Consider the following 529-residue polypeptide: NADPH-dependent thioredoxin reductase 3 (529 aa).

Residues Met-1–Ser-67 constitute a chloroplast transit peptide. The tract at residues Thr-54–Ser-78 is disordered. Residues Leu-64–Ser-78 are compositionally biased toward low complexity. Residues Ser-91–Ala-94, Glu-113–Val-120, Asn-133, Val-166, and Cys-220 contribute to the FAD site. The cysteines at positions 217 and 220 are disulfide-linked. NADP(+) is bound by residues Thr-240, Arg-265, Ile-324, and Tyr-344. Residues Asp-364 and Arg-371–Val-374 contribute to the FAD site. An NADP(+)-binding site is contributed by Arg-371. A Thioredoxin domain is found at Pro-403–Lys-529. Residues Cys-454 and Cys-457 each act as nucleophile in the active site. A disulfide bridge connects residues Cys-454 and Cys-457.

It belongs to the class-II pyridine nucleotide-disulfide oxidoreductase family. As to quaternary structure, may homodimerize. Interacts with the 2-Cys peroxiredoxin BAS1. The cofactor is FAD.

Its subcellular location is the plastid. The protein resides in the chloroplast. The enzyme catalyses [thioredoxin]-dithiol + NADP(+) = [thioredoxin]-disulfide + NADPH + H(+). Its function is as follows. Thioredoxin reductase (TR) that exhibits both TR and thioredoxin (Trx) activities. Contains a C-terminal functional Trx domain. Functions as an electron donor for plastidial 2-Cys peroxiredoxins and participates in a NADPH-dependent hydrogen peroxide scavenging system in chloroplasts in the dark. Required for chlorophyll biosynthesis and biogenesis of the photosynthetic apparatus. Activates aerobic cyclase which converts Mg-protoporhyrin monomethyl ester into protochlorophyllide. Involved in a light-dependent regulation of starch biosynthesis by redox activation of the ADP-glucose pyrophosphorylase (AGPase), a central enzyme of starch synthesis. The polypeptide is NADPH-dependent thioredoxin reductase 3 (Arabidopsis thaliana (Mouse-ear cress)).